Reading from the N-terminus, the 175-residue chain is dATP triphosphohydrolase (175 aa).

Residue Arg-19 participates in dATP binding. Co(2+) is bound by residues His-34, His-66, Asp-67, Glu-70, Asp-75, and Asp-119.

The protein belongs to the Caudovirales dATP triphosphohydrolase family. Homohexamer. Requires Co(2+) as cofactor. It depends on Zn(2+) as a cofactor.

The enzyme catalyses dATP + H2O = 2'-deoxyadenosine + triphosphate + H(+). It carries out the reaction dADP + H2O = 2'-deoxyadenosine + diphosphate. It catalyses the reaction dAMP + H2O = 2'-deoxyadenosine + phosphate. In terms of biological role, catalyzes the hydrolysis of dATP, dADP and dAMP into dA. This step is essential for Z-genome synthesis (containing aminoadenine instead of adenine). Specifically removes dATP and its precursor dADP from the nucleotide pool of the host, preventing the incorporation of A into the phage genome and favoring the integration of the Z-base into the viral genome. The chain is dATP triphosphohydrolase (datZ) from Cyanophage S-2L (Cyanobacteria phage S-2L).